The sequence spans 330 residues: tRNA U34 carboxymethyltransferase (330 aa).

Carboxy-S-adenosyl-L-methionine is bound by residues Lys91, Trp105, Lys110, Gly130, 152–154 (DPS), 181–182 (IE), Met196, Tyr200, and Arg315.

The protein belongs to the class I-like SAM-binding methyltransferase superfamily. CmoB family. As to quaternary structure, homotetramer.

The catalysed reaction is carboxy-S-adenosyl-L-methionine + 5-hydroxyuridine(34) in tRNA = 5-carboxymethoxyuridine(34) in tRNA + S-adenosyl-L-homocysteine + H(+). In terms of biological role, catalyzes carboxymethyl transfer from carboxy-S-adenosyl-L-methionine (Cx-SAM) to 5-hydroxyuridine (ho5U) to form 5-carboxymethoxyuridine (cmo5U) at position 34 in tRNAs. The sequence is that of tRNA U34 carboxymethyltransferase from Shewanella pealeana (strain ATCC 700345 / ANG-SQ1).